The sequence spans 554 residues: Urocanate hydratase (554 aa).

NAD(+) contacts are provided by residues G50–G51, Q128, G174–G176, E194, R199, N240–A241, Q261–H265, Y271–I272, and Y320. C408 is a catalytic residue. G490 serves as a coordination point for NAD(+).

This sequence belongs to the urocanase family. The cofactor is NAD(+).

It localises to the cytoplasm. The enzyme catalyses 4-imidazolone-5-propanoate = trans-urocanate + H2O. It functions in the pathway amino-acid degradation; L-histidine degradation into L-glutamate; N-formimidoyl-L-glutamate from L-histidine: step 2/3. Functionally, catalyzes the conversion of urocanate to 4-imidazolone-5-propionate. This is Urocanate hydratase from Rubrobacter xylanophilus (strain DSM 9941 / JCM 11954 / NBRC 16129 / PRD-1).